Reading from the N-terminus, the 705-residue chain is Crooked neck-like protein 1 (705 aa).

HAT repeat units follow at residues 55–87, 89–121, 123–155, 157–188, 190–221, 223–258, 260–294, 304–336, 338–372, 382–418, 420–451, 453–485, 487–521, and 523–554; these read DYRL…WEES, KDLT…MEMK, KNIN…MEDM, GNYP…FEQR, KLFE…FEER, GNIE…FEEK, KEIE…FEKQ, VVLG…MEEI, GEIE…LWIN, KDME…FEIR, LNLD…LEIE, GNFD…LETE, GETV…SEIQ, and KQFD…FVHS. The disordered stretch occupies residues 559 to 591; that stretch reads QQQKQRQQQQEEDGDSNTTKKDGGDDDNNDDIN. One copy of the HAT 15 repeat lies at 597–629; it reads IFIEAHKSLSNSDKEERLLLLESWKEFEQTFGN.

Belongs to the crooked-neck family. In terms of assembly, identified in the spliceosome C complex.

The protein localises to the nucleus. It is found in the nucleus speckle. Functionally, involved in pre-mRNA splicing process. The polypeptide is Crooked neck-like protein 1 (crnkl1) (Dictyostelium discoideum (Social amoeba)).